The sequence spans 672 residues: Glycogen [starch] synthase (672 aa).

Residue lysine 56 participates in UDP-alpha-D-glucose binding. The tract at residues 645–672 is disordered; sequence MRDNEGKVPSAATSRRPSIHSSDGEDDE. A compositionally biased stretch (polar residues) spans 655–665; sequence AATSRRPSIHS.

Belongs to the glycosyltransferase 3 family. As to quaternary structure, forms a hetero-octamer with each protomer of the gsy-1 homotetramer bound to one molecule of gyg-1. The N-terminus is involved in interprotomer contacts with gyg-1. The interaction with gyg-1 is required for glycogen production but is not required for gsy-1 intrinsic activity.

The catalysed reaction is [(1-&gt;4)-alpha-D-glucosyl](n) + UDP-alpha-D-glucose = [(1-&gt;4)-alpha-D-glucosyl](n+1) + UDP + H(+). Its pathway is glycan biosynthesis; glycogen biosynthesis. Transfers the glycosyl residue from UDP-Glc to the non-reducing end of alpha-1,4-glucan. This is Glycogen [starch] synthase from Caenorhabditis elegans.